The primary structure comprises 240 residues: Ribosomal RNA small subunit methyltransferase G (240 aa).

S-adenosyl-L-methionine is bound by residues glycine 80, phenylalanine 85, 131–132 (AE), and arginine 150.

It belongs to the methyltransferase superfamily. RNA methyltransferase RsmG family.

Its subcellular location is the cytoplasm. Functionally, specifically methylates the N7 position of a guanine in 16S rRNA. The chain is Ribosomal RNA small subunit methyltransferase G from Dictyoglomus thermophilum (strain ATCC 35947 / DSM 3960 / H-6-12).